The chain runs to 229 residues: UPF0173 metal-dependent hydrolase Hbut_0886 (229 aa).

This sequence belongs to the UPF0173 family.

The chain is UPF0173 metal-dependent hydrolase Hbut_0886 from Hyperthermus butylicus (strain DSM 5456 / JCM 9403 / PLM1-5).